Here is a 298-residue protein sequence, read N- to C-terminus: Cholesterol 25-hydroxylase (298 aa).

Asn-5 is a glycosylation site (N-linked (GlcNAc...) asparagine). 3 helical membrane-spanning segments follow: residues 38–58 (FFPV…FVVL), 84–104 (LLPC…PVTL), and 124–144 (LLSH…AWHL). Residues 128–263 (VLICLLLFDT…FTHWDKMLGT (136 aa)) enclose the Fatty acid hydroxylase domain. Residues 142–146 (WHLLH) carry the Histidine box-1 motif. The Histidine box-2 motif lies at 157–161 (HKVHH). A glycan (N-linked (GlcNAc...) asparagine) is linked at Asn-163. The next 2 helical transmembrane spans lie at 167–187 (FALA…FFDV) and 190–210 (VAML…NIWL). A Histidine box-3 motif is present at residues 238-244 (HHDLHHS).

The protein belongs to the sterol desaturase family. It depends on Fe cation as a cofactor. Post-translationally, N-glycosylated. In terms of tissue distribution, expressed in testicular macrophages at all stages, with the highest level in 10 day old animals.

It localises to the endoplasmic reticulum membrane. The catalysed reaction is cholesterol + AH2 + O2 = 25-hydroxycholesterol + A + H2O. It carries out the reaction cholesterol + NADPH + O2 + H(+) = 25-hydroxycholesterol + NADP(+) + H2O. In terms of biological role, catalyzes the formation of 25-hydroxycholesterol from cholesterol, leading to repress cholesterol biosynthetic enzymes. Plays a key role in cell positioning and movement in lymphoid tissues: 25-hydroxycholesterol is an intermediate in biosynthesis of 7-alpha,25-dihydroxycholesterol (7-alpha,25-OHC), an oxysterol that acts as a ligand for the G protein-coupled receptor GPR183/EBI2, a chemotactic receptor for a number of lymphoid cells. May play an important role in regulating lipid metabolism by synthesizing a corepressor that blocks sterol regulatory element binding protein (SREBP) processing. In testis, production of 25-hydroxycholesterol by macrophages plays a role in Leydig cell differentiation. Required to restrain inflammation in macrophages: production of 25-hydroxycholesterol protects macrophages from cholesterol overload, thereby preventing mitochondrial DNA release and subsequent activation of the AIM2 inflammasome. Interferon-stimulated gene which has broad antiviral activities against a wide range of enveloped viruses. Catalyzes the formation of 25-hydroxycholesterol from cholesterol, leading to repress cholesterol biosynthetic enzymes. Plays a key role in cell positioning and movement in lymphoid tissues: 25-hydroxycholesterol is an intermediate in biosynthesis of 7-alpha,25-dihydroxycholesterol (7-alpha,25-OHC), an oxysterol that acts as a ligand for the G protein-coupled receptor GPR183/EBI2, a chemotactic receptor for a number of lymphoid cells. May play an important role in regulating lipid metabolism by synthesizing a corepressor that blocks sterol regulatory element binding protein (SREBP) processing. As an interferon-stimulated gene, has broad antiviral activities against a wide range of enveloped viruses. Its product, 25-hydroxycholesterol, activates the ER-localized enzyme ACAT to induce internalization of accessible cholesterol on the plasma membrane and restricts virus-host membranes fusion which inhibits virus replication. In testis, production of 25-hydroxycholesterol by macrophages plays a role in Leydig cell differentiation. In Rattus norvegicus (Rat), this protein is Cholesterol 25-hydroxylase.